The sequence spans 235 residues: 1-(5-phosphoribosyl)-5-[(5-phosphoribosylamino)methylideneamino] imidazole-4-carboxamide isomerase (235 aa).

Asp-8 acts as the Proton acceptor in catalysis. Asp-127 functions as the Proton donor in the catalytic mechanism.

It belongs to the HisA/HisF family.

It localises to the cytoplasm. It catalyses the reaction 1-(5-phospho-beta-D-ribosyl)-5-[(5-phospho-beta-D-ribosylamino)methylideneamino]imidazole-4-carboxamide = 5-[(5-phospho-1-deoxy-D-ribulos-1-ylimino)methylamino]-1-(5-phospho-beta-D-ribosyl)imidazole-4-carboxamide. It participates in amino-acid biosynthesis; L-histidine biosynthesis; L-histidine from 5-phospho-alpha-D-ribose 1-diphosphate: step 4/9. The chain is 1-(5-phosphoribosyl)-5-[(5-phosphoribosylamino)methylideneamino] imidazole-4-carboxamide isomerase from Aliarcobacter butzleri (strain RM4018) (Arcobacter butzleri).